Here is a 506-residue protein sequence, read N- to C-terminus: Light-independent protochlorophyllide reductase subunit B (506 aa).

Asp36 serves as a coordination point for [4Fe-4S] cluster. Asp279 acts as the Proton donor in catalysis. 414–415 is a substrate binding site; the sequence is GL.

It belongs to the ChlB/BchB/BchZ family. In terms of assembly, protochlorophyllide reductase is composed of three subunits; BchL, BchN and BchB. Forms a heterotetramer of two BchB and two BchN subunits. It depends on [4Fe-4S] cluster as a cofactor.

The enzyme catalyses chlorophyllide a + oxidized 2[4Fe-4S]-[ferredoxin] + 2 ADP + 2 phosphate = protochlorophyllide a + reduced 2[4Fe-4S]-[ferredoxin] + 2 ATP + 2 H2O. Its pathway is porphyrin-containing compound metabolism; bacteriochlorophyll biosynthesis (light-independent). Component of the dark-operative protochlorophyllide reductase (DPOR) that uses Mg-ATP and reduced ferredoxin to reduce ring D of protochlorophyllide (Pchlide) to form chlorophyllide a (Chlide). This reaction is light-independent. The NB-protein (BchN-BchB) is the catalytic component of the complex. In Methylobacterium sp. (strain 4-46), this protein is Light-independent protochlorophyllide reductase subunit B.